The primary structure comprises 332 residues: Biotin synthase (332 aa).

The Radical SAM core domain occupies 53-282; it reads HFGKKVKLNM…TKEIRISGGR (230 aa). [4Fe-4S] cluster-binding residues include Cys71, Cys75, and Cys78. 4 residues coordinate [2Fe-2S] cluster: Cys115, Cys147, Cys207, and Arg277.

This sequence belongs to the radical SAM superfamily. Biotin synthase family. As to quaternary structure, homodimer. [4Fe-4S] cluster serves as cofactor. [2Fe-2S] cluster is required as a cofactor.

It carries out the reaction (4R,5S)-dethiobiotin + (sulfur carrier)-SH + 2 reduced [2Fe-2S]-[ferredoxin] + 2 S-adenosyl-L-methionine = (sulfur carrier)-H + biotin + 2 5'-deoxyadenosine + 2 L-methionine + 2 oxidized [2Fe-2S]-[ferredoxin]. It participates in cofactor biosynthesis; biotin biosynthesis; biotin from 7,8-diaminononanoate: step 2/2. Catalyzes the conversion of dethiobiotin (DTB) to biotin by the insertion of a sulfur atom into dethiobiotin via a radical-based mechanism. This is Biotin synthase from Bacillus cereus (strain G9842).